The primary structure comprises 488 residues: MPKVKALQCALALEIRSVTCPGVVLKDKEDIYLSICVFGQYKKTQCVPATFPLVFNARMVFEKVFPEAVDPGDVVAQLEYDTAVFELIQLVPPVGETLSTYDENTRDFMFPGPNQMSGHHDSNRQVTMRRISGLRGIAPKLEFSTTSVITECLISSRKCRTQDKFTYHSAPVEKSHGRLQCRTSRSQKKKSKSPERSKYCINTKNYEQPTISSKSHSPSPYTKRRMCELSEDTRRRLAHLNLGPYEFKKETDKPPFVIRHVDPPSPRTDNFFGSPGRDCERDGWVRMHSDHPHIGCCRSKDYKVIRSPHGRDFEDPFERCEEYLSPRTCSKPQHSARTLLVHSAPSTTPKHCASPVLNRASLRERFHSDWCSPPNCDEIHDRVKDVLKSHQAHARHLCDERDPEREDELELKRSLLYRDSAYDSDPEYSSFQRPRGSFHLDDGECWSNRAASCKGKSHRPVFENSMDKMYRNLYKKACSSVSHTQESF.

A signal peptide spans Met1–Ser17. The interval His176–Arg225 is disordered. Over residues Cys200–Pro220 the composition is skewed to polar residues. Phosphoserine occurs at positions 217 and 219. A Glycyl lysine isopeptide (Lys-Gly) (interchain with G-Cter in SUMO2) cross-link involves residue Lys248. 9 positions are modified to phosphoserine: Ser265, Ser274, Ser325, Ser343, Ser346, Ser354, Ser424, Ser465, and Ser487.

This sequence belongs to the SPATA6 family. As to quaternary structure, interacts with MYL6. In terms of tissue distribution, specifically expressed in developing spermatids and mature spermatozoa (at protein level). Isoform 1 is weakly expressed in testis, ovary, thymus and placenta. Isoform 2 and isoform 3 are testis-specific. Expression isw higher in spermatids than in spermatocytes and spermatogonia.

The protein resides in the secreted. It is found in the cell projection. The protein localises to the cilium. Its subcellular location is the flagellum. Its function is as follows. Required for formation of the sperm connecting piece during spermiogenesis. Sperm connecting piece is essential for linking the developing flagellum to the head during late spermiogenesis. May be involved in myosin-based microfilament transport through interaction with myosin subunits. The protein is Spermatogenesis-associated protein 6 of Mus musculus (Mouse).